The chain runs to 489 residues: GTPase Der (489 aa).

EngA-type G domains follow at residues 30–199 (PVVS…KDKP) and 227–403 (FRLA…SRSH). GTP is bound by residues 36-43 (GRQNVGKS), 85-89 (DTPGL), 151-154 (NKAD), 233-240 (GKPNSGKS), 280-284 (DTAGI), and 345-348 (NKWD). Residues 404–488 (RKVSTSELNK…PIRLEFRSDR (85 aa)) enclose the KH-like domain.

This sequence belongs to the TRAFAC class TrmE-Era-EngA-EngB-Septin-like GTPase superfamily. EngA (Der) GTPase family. Associates with the 50S ribosomal subunit.

In terms of biological role, GTPase that plays an essential role in the late steps of ribosome biogenesis. This Leptospira interrogans serogroup Icterohaemorrhagiae serovar Lai (strain 56601) protein is GTPase Der.